The following is a 179-amino-acid chain: Cytochrome b6-f complex iron-sulfur subunit (179 aa).

The chain crosses the membrane as a helical span at residues 21 to 43; it reads LLTFGSATGVALGMLYPVVRYFI. The 102-residue stretch at 61–162 folds into the Rieske domain; the sequence is GNDISVSDFL…AAVSDDKITF (102 aa). [2Fe-2S] cluster is bound by residues C108, H110, C126, and H129. An intrachain disulfide couples C113 to C128.

This sequence belongs to the Rieske iron-sulfur protein family. The 4 large subunits of the cytochrome b6-f complex are cytochrome b6, subunit IV (17 kDa polypeptide, PetD), cytochrome f and the Rieske protein, while the 4 small subunits are PetG, PetL, PetM and PetN. The complex functions as a dimer. The cofactor is [2Fe-2S] cluster.

The protein localises to the cellular thylakoid membrane. The catalysed reaction is 2 oxidized [plastocyanin] + a plastoquinol + 2 H(+)(in) = 2 reduced [plastocyanin] + a plastoquinone + 4 H(+)(out). Functionally, component of the cytochrome b6-f complex, which mediates electron transfer between photosystem II (PSII) and photosystem I (PSI), cyclic electron flow around PSI, and state transitions. The sequence is that of Cytochrome b6-f complex iron-sulfur subunit from Cyanothece sp. (strain PCC 7425 / ATCC 29141).